Here is a 777-residue protein sequence, read N- to C-terminus: Gliding motility regulatory protein (777 aa).

Residues 1–108 enclose the HPt domain; that stretch reads MDTEALKKSL…SDLNEDLSGA (108 aa). At histidine 49 the chain carries Phosphohistidine; by autocatalysis. Disordered regions lie at residues 129–149 and 164–212; these read TPPA…PPAP and PAPV…KSAV. 2 stretches are compositionally biased toward pro residues: residues 139–149 and 164–177; these read VAPPPAPPPAP and PAPV…PPTQ. Over residues 178–197 the composition is skewed to low complexity; sequence APVAEPGAHAAAAAPHPAAA. The Histidine kinase domain occupies 270-509; sequence DISNEVREQL…TITLRLPQSL (240 aa). One can recognise a CheW-like domain in the interval 511-645; it reads LMKVLLVRLG…VPDIMAEVRR (135 aa). In terms of domain architecture, Response regulatory spans 660–776; the sequence is RVLLVDDSPI…EVLAQAIDRL (117 aa). Residue aspartate 709 is modified to 4-aspartylphosphate.

It carries out the reaction ATP + protein L-histidine = ADP + protein N-phospho-L-histidine.. Its function is as follows. FrzE is involved in a sensory transduction pathway that controls the frequency at which cells reverse their gliding direction. FrzE seems to be capable of autophosphorylating itself on a histidine residue and then to transfer that group to an aspartate residue in the C-terminal part of the protein. The sequence is that of Gliding motility regulatory protein (frzE) from Myxococcus xanthus.